A 378-amino-acid chain; its full sequence is Chaperone protein DnaJ (378 aa).

A J domain is found at 5–70 (DYYEVLGVAK…QKRAAYDQYG (66 aa)). The CR-type zinc-finger motif lies at 138–216 (GYDTQIRVPS…CHGSGKVKET (79 aa)). Zn(2+)-binding residues include C151, C154, C168, C171, C190, C193, C204, and C207. CXXCXGXG motif repeat units lie at residues 151-158 (CEVCHGSG), 168-175 (CPTCHGQG), 190-197 (CPKCHGTG), and 204-211 (CAHCHGSG).

The protein belongs to the DnaJ family. Homodimer. Zn(2+) is required as a cofactor.

The protein resides in the cytoplasm. In terms of biological role, participates actively in the response to hyperosmotic and heat shock by preventing the aggregation of stress-denatured proteins and by disaggregating proteins, also in an autonomous, DnaK-independent fashion. Unfolded proteins bind initially to DnaJ; upon interaction with the DnaJ-bound protein, DnaK hydrolyzes its bound ATP, resulting in the formation of a stable complex. GrpE releases ADP from DnaK; ATP binding to DnaK triggers the release of the substrate protein, thus completing the reaction cycle. Several rounds of ATP-dependent interactions between DnaJ, DnaK and GrpE are required for fully efficient folding. Also involved, together with DnaK and GrpE, in the DNA replication of plasmids through activation of initiation proteins. The polypeptide is Chaperone protein DnaJ (Burkholderia vietnamiensis (strain G4 / LMG 22486) (Burkholderia cepacia (strain R1808))).